We begin with the raw amino-acid sequence, 265 residues long: Phosphatidylglycerol--prolipoprotein diacylglyceryl transferase (265 aa).

Transmembrane regions (helical) follow at residues 11-31 (AVSI…FGFI), 56-76 (MVTW…ILFY), 91-111 (IWHG…AVWL), 120-140 (FLSV…FGRI), 173-193 (QLYE…WFSG), 198-218 (VGAV…AVEF), and 233-253 (WLTM…WLLL). Arginine 139 is an a 1,2-diacyl-sn-glycero-3-phospho-(1'-sn-glycerol) binding site.

This sequence belongs to the Lgt family.

It is found in the cell inner membrane. The enzyme catalyses L-cysteinyl-[prolipoprotein] + a 1,2-diacyl-sn-glycero-3-phospho-(1'-sn-glycerol) = an S-1,2-diacyl-sn-glyceryl-L-cysteinyl-[prolipoprotein] + sn-glycerol 1-phosphate + H(+). Its pathway is protein modification; lipoprotein biosynthesis (diacylglyceryl transfer). Its function is as follows. Catalyzes the transfer of the diacylglyceryl group from phosphatidylglycerol to the sulfhydryl group of the N-terminal cysteine of a prolipoprotein, the first step in the formation of mature lipoproteins. In Nitratidesulfovibrio vulgaris (strain DSM 19637 / Miyazaki F) (Desulfovibrio vulgaris), this protein is Phosphatidylglycerol--prolipoprotein diacylglyceryl transferase.